Consider the following 78-residue polypeptide: Magnetosome protein MamL (78 aa).

Positions methionine 1–alanine 22 are cleaved as a signal peptide. At histidine 23 to histidine 38 the chain is on the lumenal side. The helical transmembrane segment at phenylalanine 39–alanine 59 threads the bilayer. Topologically, residues asparagine 60–arginine 78 are cytoplasmic.

The protein belongs to the magnetosome MamL family.

The protein resides in the magnetosome membrane. Its function is as follows. Involved in magnetite crystal maturation, but not in magnetosome vesicle tubulation or formation. One of 7 genes (mamLQBIEMO) able to induce magnetosome membrane biogenesis; coexpression of mamLQRBIEMO in a deletion of the 17 gene mamAB operon restores magnetosome vesicle formation but not magnetite biosynthesis. The sequence is that of Magnetosome protein MamL from Magnetospirillum gryphiswaldense (strain DSM 6361 / JCM 21280 / NBRC 15271 / MSR-1).